The chain runs to 167 residues: Centrin-3 (167 aa).

EF-hand domains follow at residues 25 to 60 (EQKQ…LGFD), 61 to 96 (VKKA…WILE), 98 to 133 (DPHE…LGEN), and 134 to 167 (MSDE…TGDI). The residue at position 135 (Ser135) is a Phosphoserine. Ca(2+) is bound by residues Asp147, Asp149, Asp151, Glu153, and Glu158.

The protein belongs to the centrin family. In terms of assembly, monomer. Component of the nuclear pore complex (NPC)-associated TREX-2 complex (transcription and export complex 2), composed of at least GANP, 2 copies of ENY2, PCID2, SEM1/DSS1, and either centrin CETN2 or centrin CETN3. The TREX-2 complex also associates with ALYREF/ALY and with the nucleoporin NUP153. Interacts with USP49.

It localises to the cytoplasm. It is found in the cytoskeleton. The protein localises to the microtubule organizing center. Its subcellular location is the centrosome. The protein resides in the nucleus. It localises to the nucleolus. It is found in the nucleus envelope. The protein localises to the nuclear pore complex. Its subcellular location is the centriole. Functionally, plays a fundamental role in microtubule-organizing center structure and function. In terms of biological role, as a component of the TREX-2 complex, involved in the export of mRNAs to the cytoplasm through the nuclear pores. In Homo sapiens (Human), this protein is Centrin-3 (CETN3).